Here is a 155-residue protein sequence, read N- to C-terminus: Small ribosomal subunit protein uS7 (155 aa).

Belongs to the universal ribosomal protein uS7 family. As to quaternary structure, part of the 30S ribosomal subunit. Contacts proteins S9 and S11.

Functionally, one of the primary rRNA binding proteins, it binds directly to 16S rRNA where it nucleates assembly of the head domain of the 30S subunit. Is located at the subunit interface close to the decoding center, probably blocks exit of the E-site tRNA. In Mycoplasmoides gallisepticum (strain R(low / passage 15 / clone 2)) (Mycoplasma gallisepticum), this protein is Small ribosomal subunit protein uS7.